The primary structure comprises 390 residues: Exodeoxyribonuclease 7 large subunit (390 aa).

This sequence belongs to the XseA family. In terms of assembly, heterooligomer composed of large and small subunits.

Its subcellular location is the cytoplasm. It carries out the reaction Exonucleolytic cleavage in either 5'- to 3'- or 3'- to 5'-direction to yield nucleoside 5'-phosphates.. In terms of biological role, bidirectionally degrades single-stranded DNA into large acid-insoluble oligonucleotides, which are then degraded further into small acid-soluble oligonucleotides. This chain is Exodeoxyribonuclease 7 large subunit, found in Synechococcus sp. (strain CC9311).